Consider the following 402-residue polypeptide: MNITGIIAEYNPMHNGHIHHLEKTKEICKSDVILCVMSGDFVQRGEPAIIDKWSRAYAALSSGVDLVIELPCVYSLSSAEFFAYGAVSLLNSLGSVSNICFGSEEGEMHDIYLISKILVDEPYEYKSILKDYLNQGFSFPKSRMHALEMYLNSSLSKVDHGLNHDILSSSNNILGVEYCKSLIKLKSNIKPYTIKREGNNYNDLELKTISSASAIRNALKSKKEISTLRYQVPKKTFDLISDNINSLCYKDYIFDYIKYKALTSKESLNKLPDVSEGIDNKIYNSLLKCSNMDSLMTLTKNKRYTYSRISRILTQYFIGFDCYNTESLRNSPCPYARILGFNEKGKYALKEFKKTSSIPLITKVNNYNFDALSLDINATKAYSLINKSVNPLDDYYRKIIIV.

ATP contacts are provided by residues 7–20 (IAEYNPMHNGHIHH), Gly-102, Asn-171, and Arg-196.

Belongs to the TmcAL family.

The protein resides in the cytoplasm. The catalysed reaction is cytidine(34) in elongator tRNA(Met) + acetate + ATP = N(4)-acetylcytidine(34) in elongator tRNA(Met) + AMP + diphosphate. Catalyzes the formation of N(4)-acetylcytidine (ac(4)C) at the wobble position of elongator tRNA(Met), using acetate and ATP as substrates. First activates an acetate ion to form acetyladenylate (Ac-AMP) and then transfers the acetyl group to tRNA to form ac(4)C34. The sequence is that of tRNA(Met) cytidine acetate ligase from Clostridium acetobutylicum (strain ATCC 824 / DSM 792 / JCM 1419 / IAM 19013 / LMG 5710 / NBRC 13948 / NRRL B-527 / VKM B-1787 / 2291 / W).